The sequence spans 301 residues: Phosphatidylserine decarboxylase proenzyme (301 aa).

Active-site charge relay system; for autoendoproteolytic cleavage activity residues include Asp-115, His-171, and Ser-258. Ser-258 serves as the catalytic Schiff-base intermediate with substrate; via pyruvic acid; for decarboxylase activity. Position 258 is a pyruvic acid (Ser); by autocatalysis (Ser-258).

Belongs to the phosphatidylserine decarboxylase family. PSD-B subfamily. Prokaryotic type II sub-subfamily. In terms of assembly, heterodimer of a large membrane-associated beta subunit and a small pyruvoyl-containing alpha subunit. Pyruvate is required as a cofactor. In terms of processing, is synthesized initially as an inactive proenzyme. Formation of the active enzyme involves a self-maturation process in which the active site pyruvoyl group is generated from an internal serine residue via an autocatalytic post-translational modification. Two non-identical subunits are generated from the proenzyme in this reaction, and the pyruvate is formed at the N-terminus of the alpha chain, which is derived from the carboxyl end of the proenzyme. The autoendoproteolytic cleavage occurs by a canonical serine protease mechanism, in which the side chain hydroxyl group of the serine supplies its oxygen atom to form the C-terminus of the beta chain, while the remainder of the serine residue undergoes an oxidative deamination to produce ammonia and the pyruvoyl prosthetic group on the alpha chain. During this reaction, the Ser that is part of the protease active site of the proenzyme becomes the pyruvoyl prosthetic group, which constitutes an essential element of the active site of the mature decarboxylase.

It is found in the cell membrane. It catalyses the reaction a 1,2-diacyl-sn-glycero-3-phospho-L-serine + H(+) = a 1,2-diacyl-sn-glycero-3-phosphoethanolamine + CO2. It functions in the pathway phospholipid metabolism; phosphatidylethanolamine biosynthesis; phosphatidylethanolamine from CDP-diacylglycerol: step 2/2. Functionally, catalyzes the formation of phosphatidylethanolamine (PtdEtn) from phosphatidylserine (PtdSer). The sequence is that of Phosphatidylserine decarboxylase proenzyme from Chlamydia pneumoniae (Chlamydophila pneumoniae).